A 399-amino-acid chain; its full sequence is MIKKHEYKILYKRILFTCFILIVYIFGSNISIVGSEGIYDNKDTFFKLAVSNVGGDLHTLNVFSLGLGPWLTSLVIIMLLNYRNLDQATKQTRSEKHYKERIITIVFAIFQSYFVISTYIHNNFIKDSNIILLMLILVAGTMLLVWLADQNITYGICGPMPIVLTSLIKSLFNNQHFFKLSVSVLLLILVIVTLVIALLILLFIELSEYRLNYKDIMNNSTNKTPTYLAWKLNPAGSISIMISLSVYVLLNNMINLIATLLGSNANFEFLSFANPIGIMFYIVLQIVLSYLLSRFLINTKKKADEFLKNGNYFDPIRPGRETERYLNSKARRVCWTGAILVALILAVPLYSTLLVPNLSTEIYFSMQLIILVYISINIGETIRTYLYFDRYKQILNKYW.

10 consecutive transmembrane segments (helical) span residues 14–34 (ILFTCFILIVYIFGSNISIVG), 60–80 (LNVFSLGLGPWLTSLVIIMLL), 102–122 (IITIVFAIFQSYFVISTYIHN), 128–148 (SNIILLMLILVAGTMLLVWLA), 152–172 (ITYGICGPMPIVLTSLIKSLF), 184–204 (VLLLILVIVTLVIALLILLFI), 238–258 (ISIMISLSVYVLLNNMINLIA), 272–292 (FANPIGIMFYIVLQIVLSYLL), 335–355 (WTGAILVALILAVPLYSTLLV), and 362–382 (IYFSMQLIILVYISINIGETI).

This sequence belongs to the SecY/SEC61-alpha family. SecY2 subfamily. In terms of assembly, component of the accessory SecA2/SecY2 protein translocase complex required to export cell wall proteins. May form heterotrimers with SecE and SecG subunits.

Its subcellular location is the cell membrane. Functionally, part of the accessory SecA2/SecY2 system specifically required for export of possible cell wall proteins. The central subunit of a protein translocation channel. This Staphylococcus haemolyticus (strain JCSC1435) protein is Accessory Sec system protein translocase subunit SecY2.